Consider the following 469-residue polypeptide: Ribulose bisphosphate carboxylase large chain (469 aa).

Positions 1–2 (MS) are excised as a propeptide. Residue P3 is modified to N-acetylproline. Residue K14 is modified to N6,N6,N6-trimethyllysine. Positions 123 and 173 each coordinate substrate. K175 acts as the Proton acceptor in catalysis. Substrate is bound at residue K177. 3 residues coordinate Mg(2+): K201, D203, and E204. Position 201 is an N6-carboxylysine (K201). H294 functions as the Proton acceptor in the catalytic mechanism. 3 residues coordinate substrate: R295, H327, and S379.

It belongs to the RuBisCO large chain family. Type I subfamily. As to quaternary structure, heterohexadecamer of 8 large chains and 8 small chains; disulfide-linked. The disulfide link is formed within the large subunit homodimers. The cofactor is Mg(2+). Post-translationally, the disulfide bond which can form in the large chain dimeric partners within the hexadecamer appears to be associated with oxidative stress and protein turnover.

Its subcellular location is the plastid. The protein resides in the chloroplast. It catalyses the reaction 2 (2R)-3-phosphoglycerate + 2 H(+) = D-ribulose 1,5-bisphosphate + CO2 + H2O. It carries out the reaction D-ribulose 1,5-bisphosphate + O2 = 2-phosphoglycolate + (2R)-3-phosphoglycerate + 2 H(+). Its function is as follows. RuBisCO catalyzes two reactions: the carboxylation of D-ribulose 1,5-bisphosphate, the primary event in carbon dioxide fixation, as well as the oxidative fragmentation of the pentose substrate in the photorespiration process. Both reactions occur simultaneously and in competition at the same active site. This chain is Ribulose bisphosphate carboxylase large chain, found in Dianthus caryophyllus (Carnation).